Consider the following 465-residue polypeptide: ATP-dependent protease ATPase subunit HslU (465 aa).

ATP contacts are provided by residues valine 19, 61–66, aspartate 277, glutamate 343, and arginine 415; that span reads GVGKTE.

It belongs to the ClpX chaperone family. HslU subfamily. A double ring-shaped homohexamer of HslV is capped on each side by a ring-shaped HslU homohexamer. The assembly of the HslU/HslV complex is dependent on binding of ATP.

It is found in the cytoplasm. Functionally, ATPase subunit of a proteasome-like degradation complex; this subunit has chaperone activity. The binding of ATP and its subsequent hydrolysis by HslU are essential for unfolding of protein substrates subsequently hydrolyzed by HslV. HslU recognizes the N-terminal part of its protein substrates and unfolds these before they are guided to HslV for hydrolysis. The sequence is that of ATP-dependent protease ATPase subunit HslU from Geobacillus sp. (strain WCH70).